The following is a 169-amino-acid chain: Peptidyl-prolyl cis-trans isomerase (169 aa).

The PPIase cyclophilin-type domain maps to 5-168 (FFDMTIGGQP…SEVKIAKCGQ (164 aa)).

The protein belongs to the cyclophilin-type PPIase family.

It localises to the cytoplasm. The enzyme catalyses [protein]-peptidylproline (omega=180) = [protein]-peptidylproline (omega=0). Its activity is regulated as follows. Binds cyclosporin A (CsA). CsA mediates some of its effects via an inhibitory action on PPIase. In terms of biological role, PPIases accelerate the folding of proteins. It catalyzes the cis-trans isomerization of proline imidic peptide bonds in oligopeptides. This Unspecified eudicot DB-1992 protein is Peptidyl-prolyl cis-trans isomerase.